We begin with the raw amino-acid sequence, 561 residues long: Putative transport protein YbjL (561 aa).

Transmembrane regions (helical) follow at residues 8–28 (LLNG…LCLG), 32–52 (LGSV…LLGQ), 66–86 (FMLF…SIFF), 94–114 (MLAL…GKLF), and 158–178 (NLSL…IVGA). 2 consecutive RCK C-terminal domains span residues 200 to 288 (RGLD…SFRN) and 292 to 373 (VFDR…RIGF). The next 5 helical transmembrane spans lie at 383–403 (LLAF…TFQF), 406–426 (FSFG…LGFL), 447–467 (FGLM…ISNG), 475–495 (MLIA…LFGA), and 540–560 (AIAN…WPGL).

Belongs to the AAE transporter (TC 2.A.81) family. YbjL subfamily.

Its subcellular location is the cell membrane. This Salmonella typhi protein is Putative transport protein YbjL.